A 319-amino-acid chain; its full sequence is Pantothenate kinase (319 aa).

Residue 96 to 103 (GSVAVGKS) coordinates ATP.

It belongs to the prokaryotic pantothenate kinase family.

It is found in the cytoplasm. The catalysed reaction is (R)-pantothenate + ATP = (R)-4'-phosphopantothenate + ADP + H(+). Its pathway is cofactor biosynthesis; coenzyme A biosynthesis; CoA from (R)-pantothenate: step 1/5. The polypeptide is Pantothenate kinase (Bacillus velezensis (strain DSM 23117 / BGSC 10A6 / LMG 26770 / FZB42) (Bacillus amyloliquefaciens subsp. plantarum)).